A 257-amino-acid chain; its full sequence is UPF0246 protein YaaA (257 aa).

The protein belongs to the UPF0246 family.

The polypeptide is UPF0246 protein YaaA (Salmonella choleraesuis (strain SC-B67)).